A 451-amino-acid polypeptide reads, in one-letter code: Tubulin gamma-1 chain (451 aa).

S131 is modified (phosphoserine; by BRSK1). 142 to 148 is a binding site for GTP; that stretch reads AGGTGSG.

This sequence belongs to the tubulin family. As to quaternary structure, component of the gamma-tubulin ring complex (gTuRC) consisting of TUBGCP2, TUBGCP3, TUBGCP4, TUBGCP5 and TUBGCP6 and gamma-tubulin TUBG1 or TUBG2. TUBGCP2, TUBGCP3, TUBGCP4, TUBGCP5 and TUBGCP6 assemble in a 5:5:2:1:1 stoichiometry; each is associated with a gamma-tubulin, thereby arranging 14 gamma-tubulins in a helical manner. Gamma-tubulin at the first position is blocked by TUBGCP3 at the last position, allowing 13 protafilaments to grow into a microtubule. The gTuRC (via TUBGCP3 and TUBGCP6) interacts with ACTB and MZT1; the interactions form a luminal bridge that stabilizes the initial structure during complex assembly. The gTuRC (via TUBGCP2) interacts with MZT2A/MZT2B and CDK5RAP2 (via CM1 motif); the interactions play a role in gTuRC activation. Interacts with alpha-beta tubulin heterodimers; the interaction allows microtubules to nucleate from the gTuRC. Interacts with B9D2. Interacts with CDK5RAP2; the interaction is leading to centrosomal localization of TUBG1 and CDK5RAP2. Interacts with CIMAP3. Interacts with SAS6 and NUP62 at the centrosome. Interacts with EML3 (phosphorylated at 'Thr-881') and HAUS8. Interacts with DNM2; this interaction may participate in centrosome cohesion. Interacts with CCDC66. Phosphorylation at Ser-131 by BRSK1 regulates centrosome duplication, possibly by mediating relocation of gamma-tubulin and its associated proteins from the cytoplasm to the centrosome.

The protein resides in the cytoplasm. The protein localises to the cytoskeleton. Its subcellular location is the microtubule organizing center. It is found in the centrosome. It localises to the spindle. Tubulin is the major constituent of microtubules, protein filaments consisting of alpha- and beta-tubulin heterodimers. Gamma-tubulin is a key component of the gamma-tubulin ring complex (gTuRC) which mediates microtubule nucleation. The gTuRC regulates the minus-end nucleation of alpha-beta tubulin heterodimers that grow into microtubule protafilaments, a critical step in centrosome duplication and spindle formation. The chain is Tubulin gamma-1 chain from Homo sapiens (Human).